Here is a 102-residue protein sequence, read N- to C-terminus: Large ribosomal subunit protein bL21 (102 aa).

The protein belongs to the bacterial ribosomal protein bL21 family. As to quaternary structure, part of the 50S ribosomal subunit. Contacts protein L20.

This protein binds to 23S rRNA in the presence of protein L20. The chain is Large ribosomal subunit protein bL21 from Bacillus cytotoxicus (strain DSM 22905 / CIP 110041 / 391-98 / NVH 391-98).